Reading from the N-terminus, the 483-residue chain is Dual specificity protein kinase CLK1 (483 aa).

The disordered stretch occupies residues 1–49 (MRHSKRTYCPDWDERDWDYGTWRSSSSHKRKKRSHSSAREQKRCRYDHS). The span at 26–36 (SSHKRKKRSHS) shows a compositional bias: basic residues. Positions 29–33 (KRKKR) match the Nuclear localization signal motif. Residues 37–49 (SAREQKRCRYDHS) show a composition bias toward basic and acidic residues. At Ser-61 the chain carries Phosphoserine. Over residues 84–111 (EPGHPYGEPGSRYQMHSSKSSGRSGRSS) the composition is skewed to low complexity. The tract at residues 84–146 (EPGHPYGEPG…SRSVEDDEEG (63 aa)) is disordered. Residues 112-137 (YKSKHRSRHHTSQHHSHGKSHRRKRS) are compositionally biased toward basic residues. Ser-139 carries the post-translational modification Phosphoserine. Residues 160–476 (YEIVDTLGEG…LKEALKHPFF (317 aa)) enclose the Protein kinase domain. Residues 166 to 174 (LGEGAFGKV) and Lys-190 contribute to the ATP site. The active-site Proton acceptor is the Asp-287.

The protein belongs to the protein kinase superfamily. CMGC Ser/Thr protein kinase family. Lammer subfamily. As to quaternary structure, interacts with PPIG and UBL5. Post-translationally, autophosphorylates on all three types of residues.

The protein resides in the nucleus. The catalysed reaction is L-seryl-[protein] + ATP = O-phospho-L-seryl-[protein] + ADP + H(+). It carries out the reaction L-threonyl-[protein] + ATP = O-phospho-L-threonyl-[protein] + ADP + H(+). The enzyme catalyses L-tyrosyl-[protein] + ATP = O-phospho-L-tyrosyl-[protein] + ADP + H(+). Regulates splicing of its own pre-mRNA according to its kinase activity; increased expression of the catalytically active form influences splicing to generate the catalytically inactive splicing variant lacking the kinase domain. Leucettine L41 inhibits its kinase activity and affects the regulation of alternative splicing mediated by phosphorylation of SR proteins. Dual specificity kinase acting on both serine/threonine and tyrosine-containing substrates. Phosphorylates serine- and arginine-rich (SR) proteins of the spliceosomal complex and may be a constituent of a network of regulatory mechanisms that enable SR proteins to control RNA splicing. Phosphorylates: SRSF1, SRSF3 and PTPN1. Regulates the alternative splicing of tissue factor (F3) pre-mRNA in endothelial cells. This Mus musculus (Mouse) protein is Dual specificity protein kinase CLK1.